A 689-amino-acid chain; its full sequence is DNA topoisomerase 1 (689 aa).

In terms of domain architecture, Toprim spans 3–113 (DNLVIVESPA…KENRVVFNEI (111 aa)). Mg(2+)-binding residues include Glu9 and Asp82. One can recognise a Topo IA-type catalytic domain in the interval 129 to 557 (EMNLVDAQQA…FFSSFKQDVE (429 aa)). The segment at 163 to 168 (SAGRVQ) is interaction with DNA. The active-site O-(5'-phospho-DNA)-tyrosine intermediate is the Tyr298. Residues 328–357 (SKRKASGKQGDQDAHEAIRPSSTMRTPDDM) are disordered. C4-type zinc fingers lie at residues 577–603 (CEVC…FPDC), 617–645 (CPKC…YPEC), and 658–681 (CPKC…CSNC).

This sequence belongs to the type IA topoisomerase family. In terms of assembly, monomer. Requires Mg(2+) as cofactor.

It catalyses the reaction ATP-independent breakage of single-stranded DNA, followed by passage and rejoining.. Its function is as follows. Releases the supercoiling and torsional tension of DNA, which is introduced during the DNA replication and transcription, by transiently cleaving and rejoining one strand of the DNA duplex. Introduces a single-strand break via transesterification at a target site in duplex DNA. The scissile phosphodiester is attacked by the catalytic tyrosine of the enzyme, resulting in the formation of a DNA-(5'-phosphotyrosyl)-enzyme intermediate and the expulsion of a 3'-OH DNA strand. The free DNA strand then undergoes passage around the unbroken strand, thus removing DNA supercoils. Finally, in the religation step, the DNA 3'-OH attacks the covalent intermediate to expel the active-site tyrosine and restore the DNA phosphodiester backbone. The polypeptide is DNA topoisomerase 1 (Staphylococcus aureus).